Reading from the N-terminus, the 127-residue chain is Small ribosomal subunit protein uS11 (127 aa).

Belongs to the universal ribosomal protein uS11 family. In terms of assembly, part of the 30S ribosomal subunit. Interacts with proteins S7 and S18. Binds to IF-3.

Its function is as follows. Located on the platform of the 30S subunit, it bridges several disparate RNA helices of the 16S rRNA. Forms part of the Shine-Dalgarno cleft in the 70S ribosome. This Streptococcus suis (strain 98HAH33) protein is Small ribosomal subunit protein uS11.